Here is a 361-residue protein sequence, read N- to C-terminus: Feruloyl CoA ortho-hydroxylase 2 (361 aa).

The region spanning 211-312 (GSTRINLNYY…RISVPIFVSP (102 aa)) is the Fe2OG dioxygenase domain. Residue Tyr220 participates in 2-oxoglutarate binding. Positions 235, 237, and 293 each coordinate Fe cation. Residues Arg303 and Ser305 each contribute to the 2-oxoglutarate site.

The protein belongs to the iron/ascorbate-dependent oxidoreductase family. L-ascorbate is required as a cofactor. Fe(2+) serves as cofactor. As to expression, low expression in roots.

The enzyme catalyses (E)-feruloyl-CoA + 2-oxoglutarate + O2 = (E)-6-hydroxyferuloyl-CoA + succinate + CO2. It catalyses the reaction (E)-6-hydroxyferuloyl-CoA = scopoletin + CoA. In terms of biological role, 2-oxoglutarate (OG)- and Fe(II)-dependent dioxygenase (2OGD)involved in scopoletin biosynthesis. Converts feruloyl CoA into 6'-hydroxyferuloyl CoA but has no activity with ferulic acid, feruloylquinic acid, caffeic acid, caffeoyl CoA, p-coumaric acid, cinnamic acid, cinnamoyl CoA or benzoyl CoA. In Arabidopsis thaliana (Mouse-ear cress), this protein is Feruloyl CoA ortho-hydroxylase 2.